The sequence spans 537 residues: Ribonuclease III domain-containing protein RNC1, chloroplastic (537 aa).

Residues 1 to 51 (MELCSSSPSSSLLRICSSSAPEISFSSSISQFPSKTQSILTKSRFQNLRIC) constitute a chloroplast transit peptide. 2 consecutive RNase III domains span residues 141 to 283 (LLEV…LCFG) and 415 to 515 (EHPR…TIYG).

In terms of assembly, interacts with RNA. Part of large ribonucleo-protein particles that contain CAF1 and/or CAF2.

It is found in the plastid. It localises to the chloroplast. Its function is as follows. Binds specific group II introns in chloroplasts and facilitates their splicing. Acts on both subgroup IIA and subgroup IIB introns. The substrates of the subgroup II also require the CRM domain proteins CAF1 or CAF2. Binds both single-stranded and double-stranded RNA non-specifically, but lacks endonuclease activity. Required for plastid ribosome biogenesis. The sequence is that of Ribonuclease III domain-containing protein RNC1, chloroplastic from Arabidopsis thaliana (Mouse-ear cress).